The following is a 693-amino-acid chain: Polyribonucleotide nucleotidyltransferase (693 aa).

Residues Asp-489 and Asp-495 each contribute to the Mg(2+) site. The KH domain maps to 556-615; the sequence is PQIHVMNINPAKIKDVVGRGGATVKGIVEKTGAQIDTSDSGEVKVFAKDKKSMDMAVAMI. The S1 motif domain occupies 625–693; sequence GQVYKGKIVK…GRVKLSLVAR (69 aa).

This sequence belongs to the polyribonucleotide nucleotidyltransferase family. Component of the RNA degradosome, which is a multiprotein complex involved in RNA processing and mRNA degradation. It depends on Mg(2+) as a cofactor.

The protein resides in the cytoplasm. The enzyme catalyses RNA(n+1) + phosphate = RNA(n) + a ribonucleoside 5'-diphosphate. Its function is as follows. Involved in mRNA degradation. Catalyzes the phosphorolysis of single-stranded polyribonucleotides processively in the 3'- to 5'-direction. This Francisella tularensis subsp. tularensis (strain FSC 198) protein is Polyribonucleotide nucleotidyltransferase.